Reading from the N-terminus, the 6781-residue chain is Replicase polyprotein 1ab (6781 aa).

One can recognise a CoV Nsp1 globular domain in the interval 2-109 (ASNHVTLAFA…ELELTFGRRG (108 aa)). Residues glutamate 59, asparagine 95, glutamate 99, and glutamate 102 each coordinate ssDNA. The region spanning 112 to 364 (IVPVDQYMCG…TKLKFDILSG (253 aa)) is the CoV Nsp2 N-terminal domain. A CoV Nsp2 middle domain is found at 383–776 (SALVDIVDDA…AEMYNTYLST (394 aa)). Residues 778–895 (VENLVLAGVS…VPICFKKKGG (118 aa)) form the CoV Nsp2 C-terminal domain. The region spanning 896–991 (GDVKFSDEVS…VMVSQWPLND (96 aa)) is the Ubiquitin-like 1 domain. The disordered stretch occupies residues 1009–1040 (IDSEGDEVDSSAPEKVADVANSEPGDDGLPVA). The Peptidase C16 1 domain maps to 1057 to 1296 (SFIKDTPSTV…EPVVKPFYSY (240 aa)). Cysteine 1091 acts as the For PL1-PRO activity in catalysis. A C4-type 1; degenerate zinc finger spans residues 1162–1193 (CGCGTGERIYEGCAFRMTPTLEPFPYGACAQC). Residues histidine 1239 and aspartate 1252 each act as for PL1-PRO activity in the active site. A Macro domain is found at 1297-1465 (KNVDFYQGDF…IFKEALVDTT (169 aa)). The 56-residue stretch at 1630–1685 (NKSVVIKVTEDTRSVKAVKVESTATYGQQIGPCLVNDTVVTDNKPVVADVVAKVVP) folds into the Ubiquitin-like 2 domain. A Peptidase C16 2 domain is found at 1691–1951 (SHYGFDKAGE…LLDTMNYASE (261 aa)). Residue cysteine 1729 is the For PL2-PRO activity of the active site. The C4-type 2; degenerate zinc-finger motif lies at 1808-1838 (DGCCCSKRVVTAPVVNASVLKLGVEDGLCPH). Active-site for PL2-PRO activity residues include histidine 1888 and aspartate 1901. A run of 2 helical transmembrane segments spans residues 1959 to 1979 (FMSRNLITVFLYILSILGLCF) and 2022 to 2042 (WFKVLGKFSLGIYALYALLFM). Residues 1959–2170 (FMSRNLITVF…FGDEIVVFFI (212 aa)) are HD1. The 3Ecto domain occupies 2038 to 2102 (ALLFMTIRFT…TQVVWQHLRD (65 aa)). Cystine bridges form between cysteine 2054–cysteine 2080 and cysteine 2072–cysteine 2077. 3 helical membrane passes run 2105-2125 (IGNVMPFFYLAFLAIFGGVYV), 2127-2147 (AITLYFIFQYLNSLGVFLGLQ), and 2150-2170 (IWFLQLVPFDVFGDEIVVFFI). The Y1 stretch occupies residues 2176–2266 (MFIKHVCLGC…VVKLNVQPTG (91 aa)). The CoV Nsp3 Y domain occupies 2176 to 2516 (MFIKHVCLGC…PTVCIANKKG (341 aa)). 8 residues coordinate Zn(2+): histidine 2180, cysteine 2185, cysteine 2190, cysteine 2193, cysteine 2226, histidine 2229, cysteine 2233, and cysteine 2236. Residues 2180-2193 (HVCLGCDKASCVAC) are ZF1. A ZF2 region spans residues 2226 to 2236 (CKKHNFFCLNC). Residues 2267–2356 (PATILIDKVE…LVDSALLASL (90 aa)) are Y2. The segment at 2267 to 2516 (PATILIDKVE…PTVCIANKKG (250 aa)) is coV-Y. A Y3 region spans residues 2357 to 2414 (SVDFGASLHSAFVSVLSNSFGKDLSSCNDMQDCKSTLGFDDVPLDTFNAAVAEAHRYD). Positions 2415-2516 (VLLTDMSFNN…PTVCIANKKG (102 aa)) are Y4. A run of 7 helical transmembrane segments spans residues 2528–2548 (FFWFLCLFIVAAFFALSFLDF), 2619–2639 (IPAGVYLAGKTLVFAINTIFG), 2654–2674 (GACIFNSACTTLSGLGGTAVY), 2754–2774 (GSDFVCGTGLFTLLMNVISVF), 2787–2807 (ILFNCIIAFVAVAVCFLFTKF), 2814–2834 (MSVGVFTVGACTLLNNVSYIV), and 2863–2883 (LGFLISYILIAPWWVLMVYAF). Positions 2528-2883 (FFWFLCLFIV…PWWVLMVYAF (356 aa)) are HD2. Residues 2902–2997 (LFEGDKFVGS…PTVSYNSTLQ (96 aa)) enclose the Nsp4C domain. Residues 2998 to 3299 (AGLRKMAQPS…VRQMYGVNLQ (302 aa)) form the Peptidase C30 domain. Active-site for 3CL-PRO activity residues include histidine 3038 and cysteine 3141. Transmembrane regions (helical) follow at residues 3336–3356 (GYVTPMFACLSLLSSLLMFTL), 3361–3381 (LFFQVFLIPALIVTSCINLAF), 3399–3419 (LMGFNAQGLVNIFVCFVVTIL), 3431–3451 (PASSVTYVVALLTAAYNYFYA), 3454–3474 (ILSCAMTLFASVTGNWFVGAV), 3476–3496 (YKVAVYMALRFPTFVAIFGDI), and 3500–3520 (MFCYLVLGYFTCCFYGILYWF). The tract at residues 3336 to 3520 (GYVTPMFACL…CCFYGILYWF (185 aa)) is HD3. The 83-residue stretch at 3580–3662 (SKLTDIKCSN…SYFNDNSMLQ (83 aa)) folds into the RdRp Nsp7 cofactor domain. The RdRp Nsp8 cofactor domain occupies 3663-3857 (SVASTYVGLP…LGCERIVKLQ (195 aa)). In terms of domain architecture, Nsp9 ssRNA-binding spans 3858-3965 (NNEIIPGKLK…GYIGATVRLQ (108 aa)). The ExoN/MTase coactivator domain maps to 3966 to 4103 (AGKQTEQAIN…CDRSIMQSTD (138 aa)). Residues cysteine 4039, cysteine 4042, histidine 4048, cysteine 4055, cysteine 4081, cysteine 4084, cysteine 4092, and cysteine 4094 each coordinate Zn(2+). 2 zinc fingers span residues 4039–4055 (CLYCRAHVEHPSMDGFC) and 4081–4094 (CKVCGCWLSNGCTC). One can recognise a NiRAN domain in the interval 4106 to 4355 (YLNRVRGSSA…ASECFVKSDI (250 aa)). The Nsp12 Interface domain maps to 4361 to 4459 (KSYDLLEYDF…WNNDLNLHSS (99 aa)). Zn(2+) is bound by residues histidine 4390, cysteine 4396, cysteine 4401, cysteine 4405, and cysteine 4582. The region spanning 4460 to 5027 (RLSINELLQF…NMYEKSAVLQ (568 aa)) is the Nsp12 RNA-dependent RNA polymerase domain. Residues 4462–4676 (SINELLQFCS…HQKHLKSIVN (215 aa)) form a rdRp Fingers N-ter region. Residues 4677 to 4715 (TRGASVVIGTTKFYGGWDNMLKNLIDGVENPCLMGWDYP) are rdRp Palm N-ter. Residues 4707 to 4869 (PCLMGWDYPK…CYNNDYASLG (163 aa)) form the RdRp catalytic domain. The tract at residues 4716 to 4774 (KCDRALPNMIRMISAMILGSKHTTCCSSTDRFFRLCNELAQVLTEVVYSNGGFYLKPGG) is rdRp Fingers C-ter. Histidine 4737, cysteine 4740, and cysteine 4741 together coordinate Zn(2+). A rdRp Palm C-ter region spans residues 4775–4910 (TTSGDATTAY…NKGPHEFCSQ (136 aa)). Residues serine 4854, aspartate 4855, and aspartate 4856 each act as for RNA-directed RNA polymerase activity in the active site. The interval 4911–5027 (HTMQIVDKEG…NMYEKSAVLQ (117 aa)) is rdRp Thumb. The CV ZBD domain maps to 5028 to 5140 (SAGLCVVCGS…EDFNRIATSD (113 aa)). Residues cysteine 5032, cysteine 5035, cysteine 5043, cysteine 5046, cysteine 5053, cysteine 5056, histidine 5060, histidine 5066, cysteine 5077, cysteine 5082, cysteine 5099, and histidine 5102 each coordinate Zn(2+). The region spanning 5275–5466 (STIHKLHPAF…MCALKPDVFL (192 aa)) is the (+)RNA virus helicase ATP-binding domain. 5310 to 5317 (GPPGSGKS) provides a ligand contact to ATP. In terms of domain architecture, (+)RNA virus helicase C-terminal spans 5467 to 5636 (HKCYRCPAEI…EGCGLFKDCS (170 aa)). One can recognise an ExoN domain in the interval 5696–5910 (LFCTRDFAMR…RCLAIHDCFV (215 aa)). Residues aspartate 5714, glutamate 5716, and glutamate 5815 each act as for exoribonuclease activity in the active site. Residues cysteine 5831, cysteine 5833, cysteine 5849, histidine 5852, histidine 5880, cysteine 5884, and histidine 5887 each coordinate Zn(2+). Catalysis depends on for exoribonuclease activity residues histidine 5891 and aspartate 5896. Cysteine 5902 provides a ligand contact to Zn(2+). An N7-MTase domain is found at 5919–6140 (YPFIGNEAVI…NLWQTFSNNL (222 aa)). 5954-5960 (DIGNPKG) is an S-adenosyl-L-methionine binding site. Residues 6031–6045 (CNGGSLYVNNHAFHT) are gpppA-binding. Zn(2+) contacts are provided by cysteine 6069, cysteine 6086, cysteine 6097, and histidine 6100. The 61-residue stretch at 6142–6202 (GLENIAFNVL…NVAFELYAKR (61 aa)) folds into the Nsp15 N-terminal oligomerization domain. One can recognise an AV-Nsp11N/CoV-Nsp15M domain in the interval 6203 to 6320 (KVGLTPPITI…IYTRKNGKFE (118 aa)). In terms of domain architecture, NendoU spans 6337–6477 (SPRSDMEKDF…KDHKLQTFYP (141 aa)). Residues histidine 6367, histidine 6382, and lysine 6423 each act as for uridylate-specific endoribonuclease activity in the active site. One can recognise a Nidovirus-type SAM-dependent 2'-O-MTase domain in the interval 6481–6777 (ASEWKCGYSM…AICGFSNHLV (297 aa)). Active-site for 2'-O-methyltransferase residues include lysine 6525, aspartate 6609, lysine 6649, and glutamate 6682.

The protein belongs to the coronaviruses polyprotein 1ab family. In terms of assembly, interacts with PL-PRO and nsp6. As to quaternary structure, monomer. Homodimer; disulfide-linked. Interacts with nsp8 and nsp12 to form the replication-transcription complex (RTC): nsp12, nsp7, two subunits of nsp8, and up to two subunits of nsp13. Eight copies of nsp7 and eight copies of nsp8 assemble to form a heterohexadecamer dsRNA-encircling ring structure. In terms of assembly, interacts with nsp7, nsp13 and nsp12 to form the replication-transcription complex (RTC): nsp12, nsp7, two subunits of nsp8, and up to two subunits of nsp13. Eight copies of nsp7 and eight copies of nsp8 assemble to form a heterohexadecamer dsRNA-encircling ring structure. As to quaternary structure, homodimer. Forms a dodecamer and interacts with nsp14 and nsp16; these interactions enhance nsp14 and nsp16 enzymatic activities. It depends on Mn(2+) as a cofactor. Post-translationally, specific enzymatic cleavages in vivo by its own proteases yield mature proteins. 3CL-PRO and PL-PRO proteinases are autocatalytically processed.

It is found in the host cytoplasm. Its subcellular location is the host nucleus. It localises to the host membrane. The protein resides in the host perinuclear region. The protein localises to the host endoplasmic reticulum. It is found in the host endoplasmic reticulum-Golgi intermediate compartment. It carries out the reaction Thiol-dependent hydrolysis of ester, thioester, amide, peptide and isopeptide bonds formed by the C-terminal Gly of ubiquitin (a 76-residue protein attached to proteins as an intracellular targeting signal).. The enzyme catalyses a 5'-end diphospho-ribonucleoside in mRNA + GTP + H(+) = a 5'-end (5'-triphosphoguanosine)-ribonucleoside in mRNA + diphosphate. The catalysed reaction is RNA(n) + a ribonucleoside 5'-triphosphate = RNA(n+1) + diphosphate. It catalyses the reaction ATP + H2O = ADP + phosphate + H(+). It carries out the reaction a 5'-end (5'-triphosphoguanosine)-ribonucleoside in mRNA + S-adenosyl-L-methionine = a 5'-end (N(7)-methyl 5'-triphosphoguanosine)-ribonucleoside in mRNA + S-adenosyl-L-homocysteine. The enzyme catalyses uridylyl-uridylyl-ribonucleotide-RNA = a 3'-end uridylyl-2',3'-cyclophospho-uridine-RNA + a 5'-end dephospho-ribonucleoside-RNA. The catalysed reaction is a 5'-end (N(7)-methyl 5'-triphosphoguanosine)-ribonucleoside in mRNA + S-adenosyl-L-methionine = a 5'-end (N(7)-methyl 5'-triphosphoguanosine)-(2'-O-methyl-ribonucleoside) in mRNA + S-adenosyl-L-homocysteine + H(+). Its activity is regulated as follows. Inhibited by the substrate-analog Cbz-Val-Asn-Ser-Thr-Leu-Gln-CMK. Inhibited by (R)-16. Its function is as follows. Multifunctional protein responsible for the transcription of negative stranded RNA, leader RNA, subgenomic mRNAs and progeny virion RNA as well as proteinases responsible for the cleavage of the polyprotein into functional products. Functionally, plays a role in the inhibition of host interferon and pro-inflammatory cytokines production. Suppresses host RELA/p65 activation by blocking NFKBIA phosphorylation. Targets also the RLR pathway downstream of the IRF3 activation by targeting host CREBBP to proteasomal degradation. Responsible for the cleavages located at the N-terminus of the replicase polyprotein. Participates together with nsp4 in the assembly of virally-induced cytoplasmic double-membrane vesicles necessary for viral replication. Forms a molecular pore spanning the double membrane of the coronavirus replication organelle. In addition, PLP2 possesses a deubiquitinating/deISGylating activity and processes both 'Lys-48'- and 'Lys-63'-linked polyubiquitin chains from cellular substrates. PLP2 also antagonizes innate immune induction of type I interferon by blocking the nuclear translocation of host IRF-3. Participates in the inhibition of the integrated stress response (ISR) in the infected host cell. In terms of biological role, participates in the assembly of virally-induced cytoplasmic double-membrane vesicles necessary for viral replication. Its function is as follows. Responsible for the majority of cleavages as it cleaves the C-terminus of replicase polyprotein at 11 sites. Recognizes substrates containing the core sequence [ILMVF]-Q-|-[SGACN]. Also contains an ADP-ribose-1''-phosphate (ADRP)-binding function. Participates in the inhibition of the integrated stress response (ISR) in the infected host cell. Functionally, plays a role in the initial induction of autophagosomes from host endoplasmic reticulum. Later, limits the expansion of these phagosomes that are no longer able to deliver viral components to lysosomes. Plays a role in viral RNA synthesis. Forms a hexadecamer with nsp8 (8 subunits of each) that may participate in viral replication by acting as a primase. Alternatively, may synthesize substantially longer products than oligonucleotide primers. In terms of biological role, plays a role in viral RNA synthesis. Forms a hexadecamer with nsp7 (8 subunits of each) that may participate in viral replication by acting as a primase. Alternatively, may synthesize substantially longer products than oligonucleotide primers. Its function is as follows. Forms a primer, NSP9-pU, which is utilized by the polymerase for the initiation of RNA chains. Interacts with ribosome signal recognition particle RNA (SRP). Together with NSP8, suppress protein integration into the cell membrane, thereby disrupting host immune defenses. Functionally, plays a pivotal role in viral transcription by stimulating both nsp14 3'-5' exoribonuclease and nsp16 2'-O-methyltransferase activities. Therefore plays an essential role in viral mRNAs cap methylation. RNA-directed RNA polymerase that catalyzes the transcription of viral genomic and subgenomic RNAs. Acts in complex with nsp7 and nsp8 to transcribe both the minus and positive strands of genomic RNA. The kinase-like NiRAN domain of NSP12 attaches one or more nucleotides to the amino terminus of NSP9, forming a covalent RNA-protein intermediate that serves as transcription/replication primer. Subgenomic RNAs (sgRNAs) are formed by discontinuous transcription: The polymerase has the ability to pause at transcription-regulating sequences (TRS) and jump to the leader TRS, resulting in a major deletion. This creates a series of subgenomic RNAs that are replicated, transcribed and translated. In addition, Nsp12 is a subunit of the viral RNA capping enzyme that catalyzes the RNA guanylyltransferase reaction for genomic and sub-genomic RNAs. Subsequently, the NiRAN domain transfers RNA to GDP, and forms the core cap structure GpppA-RNA. In terms of biological role, plays a role in viral RNA synthesis. Multi-functional protein with a zinc-binding domain in N-terminus displaying RNA and DNA duplex-unwinding activities with 5' to 3' polarity. ATPase activity is strongly stimulated by poly(U), poly(dT), poly(C), poly(dA), but not by poly(G). Its function is as follows. Plays a role in viral RNA synthesis through two distinct activities. The N7-guanine methyltransferase activity plays a role in the formation of the cap structure GpppA-RNA. The proofreading exoribonuclease reduces the sensitivity of the virus to RNA mutagens during replication. This activity acts on both ssRNA and dsRNA in a 3'-5' direction. Functionally, plays a role in viral transcription/replication and prevents the simultaneous activation of host cell dsRNA sensors, such as MDA5/IFIH1, OAS, and PKR. Acts by degrading the 5'-polyuridines generated during replication of the poly(A) region of viral genomic and subgenomic RNAs. Catalyzes a two-step reaction in which a 2'3'-cyclic phosphate (2'3'-cP) is first generated by 2'-O transesterification, which is then hydrolyzed to a 3'-phosphate (3'-P). If not degraded, poly(U) RNA would hybridize with poly(A) RNA tails and activate host dsRNA sensors. Decreases the RNA levels and thus the expression of host TBK1 and IRF3, antagonizing the host innate response. The sequence is that of Replicase polyprotein 1ab (rep) from Sus scrofa (Pig).